A 103-amino-acid chain; its full sequence is Auxin-responsive protein SAUR50 (103 aa).

The protein belongs to the ARG7 family.

Its function is as follows. Effector of hormonal and environmental signals in plant growth. Involved in heliotropism. The sequence is that of Auxin-responsive protein SAUR50 from Helianthus annuus (Common sunflower).